The sequence spans 543 residues: Cytochrome P450 monooxygenase sphH (543 aa).

2 helical membrane-spanning segments follow: residues 1-21 (MGPI…SVYF) and 32-52 (IATF…YQLF). Cys-487 provides a ligand contact to heme.

Belongs to the cytochrome P450 family. Requires heme as cofactor.

The protein resides in the membrane. It carries out the reaction presphingofungin + 2 reduced [NADPH--hemoprotein reductase] + O2 = sphingofungin B1 + 2 oxidized [NADPH--hemoprotein reductase] + H2O + 2 H(+). It functions in the pathway secondary metabolite biosynthesis. In terms of biological role, cytochrome P450 monooxygenase; part of the gene cluster that mediates the biosynthesis of sphingofungins, bioactive molecules acting as sphingolipid inhibitors via inhibiting serine palmitoyl transferase (SPT). Within the pathway, sphH catalyzes the conversion of presphingofungin into sphingofungin B1 via hydroxylagtion at position C-14. Sphingofungin biosynthesis starts with the PKS sphB that produces an C18 polyketide precursor 3-hydroxyoctadeca-4,10-dienoyl-ACP containing one delta-6 desaturation and one delta-12 desaturation. The aminoacyl transferase sphA uses the sphB product to produce 3-keto-presphingofungin by adding an aminomalonate molecule. SphF then reduces the C-3 ketone of 3-keto-presphingofungin which leads to presphingofungin. The cytochrome P450 monooxygenase sphH converts presphingofungin into sphingofungin B1 which is further converted to sphingofungin B by the dioxygenase sphC. SphC is also able to convert presphingofungin into sphingofungin B2. The acetyltransferase sphE acetylates sphingofungin B to produce sphingofungin C, but can also convert sphingofungin B1 into sphingofungin C1 and sphingofungin B2 into sphingofungin C2. Finally, sphingofungin C can be spontaneously converted into sphingofungin D. The polypeptide is Cytochrome P450 monooxygenase sphH (Aspergillus fumigatus (strain CBS 144.89 / FGSC A1163 / CEA10) (Neosartorya fumigata)).